A 593-amino-acid chain; its full sequence is Transmembrane 9 superfamily member 4 (593 aa).

A signal peptide spans 1–25 (MVLLPSMTSLLLVFLFLYGVSPVIS). Residues 26 to 230 (DGSDHRYKVG…SMPHHLEIHW (205 aa)) lie on the Lumenal side of the membrane. Residues 231–251 (FSIINSCVTVLLLTGFLATIL) form a helical membrane-spanning segment. The Cytoplasmic segment spans residues 252–303 (MRVLKNDFVKYAHDEEAVDDQEETGWKLIHGDVFRFPKHKSLLAAALGSGTQ). A helical transmembrane segment spans residues 304 to 324 (LFTLAVFIFMLALVGVFYPYN). The Lumenal segment spans residues 325 to 326 (RG). A helical membrane pass occupies residues 327–347 (ALFTALVVIYALTSGIAGYTA). At 348-366 (ASFYCQLEGTNWVRNVILT) the chain is on the cytoplasmic side. The helical transmembrane segment at 367-387 (GSLFCGPLLITFSFLNTVAIA) threads the bilayer. The Lumenal segment spans residues 388 to 398 (YQATAALPFGT). Residues 399-419 (IVVIFLIWALVTSPLLILGGI) traverse the membrane as a helical segment. Residues 420-453 (AGKNRKSEFQAPCRTTKYPREIPPMRWYRRTLPQ) are Cytoplasmic-facing. Residues 454–474 (MAMAGFLPFSAIYIELYYIFA) traverse the membrane as a helical segment. The Lumenal portion of the chain corresponds to 475–486 (SVWGHRIYTIYS). Residues 487–507 (ILSIVFLILVIVTAFITVALT) form a helical membrane-spanning segment. Over 508–522 (YFQLAAEDHEWWWRS) the chain is Cytoplasmic. The chain crosses the membrane as a helical span at residues 523–543 (LLCGGSTGLFIYAYCLYYYYA). Residues 544–554 (RSDMSGFMQTS) lie on the Lumenal side of the membrane. Residues 555–575 (FFFGYMACICYGFFLMLGTIG) traverse the membrane as a helical segment. At 576 to 593 (FCASLLFVRHIYRSIKCE) the chain is on the cytoplasmic side. The Endoplasmic reticulum export signal signature appears at 582-587 (FVRHIY). The Golgi retention signal motif lies at 591–593 (KCE).

The protein belongs to the nonaspanin (TM9SF) (TC 9.A.2) family.

The protein localises to the endosome membrane. It is found in the golgi apparatus membrane. The protein is Transmembrane 9 superfamily member 4 of Arabidopsis thaliana (Mouse-ear cress).